A 79-amino-acid chain; its full sequence is Conotoxin ArMSGL-0123 (79 aa).

An N-terminal signal peptide occupies residues 1–20; sequence MSRLGIMVLTLLLLVFIVTS. Positions 21 to 44 are excised as a propeptide; that stretch reads HQDAGEKQATKRAAVNFRWRRSFT. 3 disulfides stabilise this stretch: cysteine 52/cysteine 64, cysteine 56/cysteine 73, and cysteine 63/cysteine 77. Leucine 78 bears the Leucine amide mark.

The protein belongs to the conotoxin O3 superfamily. Expressed by the venom duct.

It localises to the secreted. This Conus arenatus (Sand-dusted cone) protein is Conotoxin ArMSGL-0123.